We begin with the raw amino-acid sequence, 431 residues long: Gamma-glutamyl phosphate reductase (431 aa).

It belongs to the gamma-glutamyl phosphate reductase family.

It is found in the cytoplasm. The enzyme catalyses L-glutamate 5-semialdehyde + phosphate + NADP(+) = L-glutamyl 5-phosphate + NADPH + H(+). It functions in the pathway amino-acid biosynthesis; L-proline biosynthesis; L-glutamate 5-semialdehyde from L-glutamate: step 2/2. Catalyzes the NADPH-dependent reduction of L-glutamate 5-phosphate into L-glutamate 5-semialdehyde and phosphate. The product spontaneously undergoes cyclization to form 1-pyrroline-5-carboxylate. In Bifidobacterium longum subsp. infantis (strain ATCC 15697 / DSM 20088 / JCM 1222 / NCTC 11817 / S12), this protein is Gamma-glutamyl phosphate reductase.